Consider the following 1935-residue polypeptide: Myosin-7 (1935 aa).

The Myosin N-terminal SH3-like domain occupies 32–81 (DLKKDVFVPDDKEEFVKAKIISREGGKITAETEHGKTVTVKEDQVLQQNP). Positions 85-778 (DKIEDMAMLT…LLGLLEEMRD (694 aa)) constitute a Myosin motor domain. Lys-129 carries the N6,N6,N6-trimethyllysine modification. ATP is bound at residue 178-185 (GESGAGKT). Position 378 is a phosphothreonine (Thr-378). 2 actin-binding regions span residues 655-677 (LNKL…IPNE) and 757-771 (RFGH…GLLG). The 30-residue stretch at 781-810 (LSRIITRIQAQSRGVLARMEFKKLLERRDS) folds into the IQ domain. Residues 839–1935 (LLKSAETEKE…DIGTKGLNEE (1097 aa)) are a coiled coil. Residues Ser-1137 and Ser-1269 each carry the phosphoserine modification. A Phosphothreonine modification is found at Thr-1282. Residue Tyr-1308 is modified to Phosphotyrosine. Thr-1309 bears the Phosphothreonine mark. Ser-1510 carries the phosphoserine modification. Position 1513 is a phosphothreonine (Thr-1513). A disordered region spans residues 1907–1935 (EERADIAESQVNKLRAKSRDIGTKGLNEE). Residues 1923–1935 (KSRDIGTKGLNEE) are compositionally biased toward basic and acidic residues.

This sequence belongs to the TRAFAC class myosin-kinesin ATPase superfamily. Myosin family. Muscle myosin is a hexameric protein that consists of 2 heavy chain subunits (MHC), 2 alkali light chain subunits (MLC) and 2 regulatory light chain subunits (MLC-2). Interacts with ECPAS. Interacts (via C-terminus) with LRRC39.

It is found in the cytoplasm. The protein localises to the myofibril. Its subcellular location is the sarcomere. Functionally, myosins are actin-based motor molecules with ATPase activity essential for muscle contraction. Forms regular bipolar thick filaments that, together with actin thin filaments, constitute the fundamental contractile unit of skeletal and cardiac muscle. The sequence is that of Myosin-7 (MYH7) from Equus caballus (Horse).